The following is a 389-amino-acid chain: MPVTKMQDLDLGGKTVVIREDLNVPMKDGIITNDKRIRAALPTIQLALEKGAGVIVLSHLGRPTEGQYDQQFSLAPVADRLAQLLGQPVTLAKSLDEAKTAPGQVTLLENVRFLPGEKKNDPELAAKLAGLGDVYVMDAFGSAHRAHASTEGAVRTAAVACAGPLLQAELEAFDKVLDNPARPVVAIVGGAKVSTKLTLLENLLEKVDVLIVGGGIANTFLAAAGYMVGKSLYEEDLLPEAQKIMALAKTLNKELPLPVDVITAEELAPRQQTMLHAVGDVPGDQMILDIGPETLTLYEKFLSKAATVVWNGPVGAFEIEPFGDGTKALAEYLSDSKAFVVVGGGDSVAAVEKYGLADRMGYISTGGGASLELLEGKKLPSVAALEDRA.

Residues 21 to 23 (DLN), Arg-36, 59 to 62 (HLGR), Arg-112, and Arg-145 each bind substrate. ATP contacts are provided by residues Lys-196, Glu-318, and 344-347 (GGDS).

This sequence belongs to the phosphoglycerate kinase family. In terms of assembly, monomer.

The protein resides in the cytoplasm. It catalyses the reaction (2R)-3-phosphoglycerate + ATP = (2R)-3-phospho-glyceroyl phosphate + ADP. It participates in carbohydrate degradation; glycolysis; pyruvate from D-glyceraldehyde 3-phosphate: step 2/5. The polypeptide is Phosphoglycerate kinase (Desulfovibrio desulfuricans (strain ATCC 27774 / DSM 6949 / MB)).